The sequence spans 465 residues: Serine/threonine-protein kinase 38 (465 aa).

At alanine 2 the chain carries N-acetylalanine. Residues 62–87 (KRLRRSAHARKETEFLRLKRTRLGLE) form an interaction with S100B region. Residue threonine 74 is modified to Phosphothreonine. The Protein kinase domain maps to 89–382 (FESLKVIGRG…VEEIKSNSFF (294 aa)). ATP contacts are provided by residues 95–103 (IGRGAFGEV) and lysine 118. The Proton acceptor role is filled by aspartate 212. Serine 264 carries the phosphoserine modification. Serine 281 bears the Phosphoserine; by autocatalysis mark. The short motif at 306–311 (WSLGVI) is the UFM1-interacting motif (UFIM) element. The AGC-kinase C-terminal domain maps to 383–455 (EGVDWEHIRE…KRFEGLTARG (73 aa)). Threonine 444 bears the Phosphothreonine; by STK24/MST3 mark.

Belongs to the protein kinase superfamily. AGC Ser/Thr protein kinase family. As to quaternary structure, homodimeric S100B binds two molecules of STK38. Interacts with MOB1 and MOB2. Interacts with MAP3K1 and MAP3K2 (via the kinase catalytic domain). Forms a tripartite complex with MOBKL1B and STK3/MST2. Interacts with MICAL1; leading to inhibit the protein kinase activity by antagonizing activation by MST1/STK4. Requires Mg(2+) as cofactor. In terms of processing, ISGylated. Phosphorylated by STK3/MST2 and this is enhanced by MOBKL1B. In terms of tissue distribution, ubiquitously expressed with highest levels observed in peripheral blood leukocytes.

It localises to the nucleus. The protein localises to the cytoplasm. Its subcellular location is the chromosome. The catalysed reaction is L-seryl-[protein] + ATP = O-phospho-L-seryl-[protein] + ADP + H(+). It carries out the reaction L-threonyl-[protein] + ATP = O-phospho-L-threonyl-[protein] + ADP + H(+). With respect to regulation, activated by binding of S100B which releases autoinhibitory N-lobe interactions, enabling ATP to bind and the autophosphorylation of Ser-281. Thr-444 then undergoes calcium-dependent phosphorylation by STK24/MST3. Interactions between phosphorylated Thr-444 and the N-lobe promote additional structural changes that complete the activation of the kinase. Autoinhibition is also released by the binding of MOB1/MOBKL1A and MOB2/HCCA2 to the N-terminal of STK38. Serine/threonine-protein kinase that acts as a negative regulator of MAP3K1/2 signaling. Converts MAP3K2 from its phosphorylated form to its non-phosphorylated form and inhibits autophosphorylation of MAP3K2. Acts as an ufmylation 'reader' in a kinase-independent manner: specifically recognizes and binds mono-ufmylated histone H4 in response to DNA damage, promoting the recruitment of SUV39H1 to the double-strand breaks, resulting in ATM activation. The protein is Serine/threonine-protein kinase 38 of Homo sapiens (Human).